The chain runs to 753 residues: Replication restart protein PriA (753 aa).

The 168-residue stretch at 228–395 (SLVAEQFQTC…LSKKYTLSVL (168 aa)) folds into the Helicase ATP-binding domain. Residue 241–248 (GVTGSGKT) participates in ATP binding. The short motif at 337-340 (DEEH) is the DEAH box element. Zn(2+)-binding residues include Cys458, Cys461, Cys467, Cys470, Cys485, Cys488, Cys499, and Cys502. In terms of domain architecture, Helicase C-terminal spans 491–646 (RLSKPITSCP…DFPAFYKEEI (156 aa)).

This sequence belongs to the helicase family. PriA subfamily. In terms of assembly, component of the replication restart primosome. Zn(2+) is required as a cofactor.

The enzyme catalyses Couples ATP hydrolysis with the unwinding of duplex DNA by translocating in the 3'-5' direction.. It carries out the reaction ATP + H2O = ADP + phosphate + H(+). In terms of biological role, initiates the restart of stalled replication forks, which reloads the replicative helicase on sites other than the origin of replication. Recognizes and binds to abandoned replication forks and remodels them to uncover a helicase loading site. Promotes assembly of the primosome at these replication forks. In Chlamydia trachomatis serovar D (strain ATCC VR-885 / DSM 19411 / UW-3/Cx), this protein is Replication restart protein PriA.